Reading from the N-terminus, the 452-residue chain is Phosphoglucosamine mutase (452 aa).

Ser-103 serves as the catalytic Phosphoserine intermediate. Residues Ser-103, Asp-244, Asp-246, and Asp-248 each coordinate Mg(2+). Ser-103 carries the post-translational modification Phosphoserine.

Belongs to the phosphohexose mutase family. Mg(2+) serves as cofactor. Post-translationally, activated by phosphorylation.

The enzyme catalyses alpha-D-glucosamine 1-phosphate = D-glucosamine 6-phosphate. Catalyzes the conversion of glucosamine-6-phosphate to glucosamine-1-phosphate. The chain is Phosphoglucosamine mutase from Rhodospirillum rubrum (strain ATCC 11170 / ATH 1.1.1 / DSM 467 / LMG 4362 / NCIMB 8255 / S1).